The following is a 105-amino-acid chain: UPF0145 protein lpg0197 (105 aa).

The protein belongs to the UPF0145 family.

This Legionella pneumophila subsp. pneumophila (strain Philadelphia 1 / ATCC 33152 / DSM 7513) protein is UPF0145 protein lpg0197.